The following is a 95-amino-acid chain: FXYD domain-containing ion transport regulator 6 (95 aa).

The first 18 residues, 1 to 18 (MELVLVFLCSLLAPMVLA), serve as a signal peptide directing secretion. The Extracellular segment spans residues 19–35 (STAEKEKEMDPFHYDYQ). A helical transmembrane segment spans residues 36–58 (TLRIGGLVFAVVLFSVGILLILS). Over 59-95 (RRCKCSFNQKPRAPGDEEAQVENLITANATEPQKAEN) the chain is Cytoplasmic.

It belongs to the FXYD family. Regulatory subunit of the sodium/potassium-transporting ATPase which is composed of a catalytic alpha subunit, a non-catalytic beta subunit and an additional regulatory subunit. The regulatory subunit, a member of the FXYD protein family, modulates the enzymatic activity in a tissue- and isoform-specific way by changing affinities of the Na+/K+-ATPase toward Na(+), K(+) or ATP.

It is found in the cell membrane. Its function is as follows. Associates with and regulates the activity of the sodium/potassium-transporting ATPase (NKA) which catalyzes the hydrolysis of ATP coupled with the exchange of Na(+) and K(+) ions across the plasma membrane. Reduces the apparent affinity for intracellular Na(+) with no change in the apparent affinity for extracellular K(+). In addition to modulating NKA kinetics, may also function as a regulator of NKA localization to the plasma membrane. This Macaca fascicularis (Crab-eating macaque) protein is FXYD domain-containing ion transport regulator 6 (FXYD6).